We begin with the raw amino-acid sequence, 104 residues long: Iron-sulfur cluster assembly protein CyaY (104 aa).

It belongs to the frataxin family.

Involved in iron-sulfur (Fe-S) cluster assembly. May act as a regulator of Fe-S biogenesis. The chain is Iron-sulfur cluster assembly protein CyaY from Aliivibrio salmonicida (strain LFI1238) (Vibrio salmonicida (strain LFI1238)).